We begin with the raw amino-acid sequence, 187 residues long: UPF0301 protein Sputcn32_2681 (187 aa).

It belongs to the UPF0301 (AlgH) family.

The protein is UPF0301 protein Sputcn32_2681 of Shewanella putrefaciens (strain CN-32 / ATCC BAA-453).